The primary structure comprises 1416 residues: Telomere-associated protein RIF1 (1416 aa).

Disordered stretches follow at residues 789-858, 886-984, 1021-1054, and 1166-1186; these read PIRK…PVVQ, PEVA…HLTG, ARAQDRAEQVSTPTSELNELTGTDHTSTPIQAPP, and TARTATTDKSLDKSTGEAPEE. Low complexity predominate over residues 928-945; it reads GSSGDPAASAGAVAAGEM. Residues 1029–1050 are compositionally biased toward polar residues; the sequence is QVSTPTSELNELTGTDHTSTPI.

The protein belongs to the RIF1 family. Highly divergent. As to quaternary structure, interacts with Pp1-87b. Interacts with SuUR (via SNF2-like region). In terms of processing, phosphorylated, probably by Cdk1; phosphorylation regulates dissociation from heterochromatin. Expressed in nurse cells and follicle cells in the adult female (at protein level). Detected in adult at extremely low levels.

The protein resides in the nucleus. The protein localises to the chromosome. It is found in the telomere. In terms of biological role, regulates the timing of initiation of DNA replication. Functions in copy number control by promoting the underreplication of DNA, which is found in many late replicating euchromatic regions of salivary gland polytene chromosomes. Promotes underreplication by localizing to active DNA replication forks in a partially SuUR-dependent manner, and inhibiting replication fork progression. Might also work as an adapter to recruit Pp1-87B to multiple sites on the chromosome and may function with Pp1-87B to mediate underreplication. Plays an essential role in embryonic development, in the transition from larvae to pupae and, probably, in proliferating tissues later on. In embryos, during mid-blastula transition, binds to and selectively delays the replication of large blocks of repetitive DNA satellite sequences during S phase in response to the activity of Cdk1; maternal Rif1 is specifically required for the normal extension of S phase 14. Unlike mammalian orthologs, does not appear to play a role in DNA damage repair. In Drosophila melanogaster (Fruit fly), this protein is Telomere-associated protein RIF1.